A 341-amino-acid chain; its full sequence is L-threonine 3-dehydrogenase (341 aa).

Cys-38 contributes to the Zn(2+) binding site. Active-site charge relay system residues include Thr-40 and His-43. Positions 63, 64, 93, 96, 99, and 107 each coordinate Zn(2+). NAD(+) is bound by residues Ile-175, Asp-195, Arg-200, 262–264, and 286–287; these read LGI and IY.

This sequence belongs to the zinc-containing alcohol dehydrogenase family. As to quaternary structure, homotetramer. Zn(2+) serves as cofactor.

It is found in the cytoplasm. It catalyses the reaction L-threonine + NAD(+) = (2S)-2-amino-3-oxobutanoate + NADH + H(+). It participates in amino-acid degradation; L-threonine degradation via oxydo-reductase pathway; glycine from L-threonine: step 1/2. Functionally, catalyzes the NAD(+)-dependent oxidation of L-threonine to 2-amino-3-ketobutyrate. The sequence is that of L-threonine 3-dehydrogenase from Shigella sonnei (strain Ss046).